Reading from the N-terminus, the 335-residue chain is Beta-ketoacyl-[acyl-carrier-protein] synthase III (335 aa).

Residues cysteine 119 and histidine 261 contribute to the active site. The segment at 262-266 (QANQR) is ACP-binding. Residue asparagine 291 is part of the active site.

This sequence belongs to the thiolase-like superfamily. FabH family. In terms of assembly, homodimer.

It localises to the cytoplasm. The enzyme catalyses malonyl-[ACP] + acetyl-CoA + H(+) = 3-oxobutanoyl-[ACP] + CO2 + CoA. The protein operates within lipid metabolism; fatty acid biosynthesis. In terms of biological role, catalyzes the condensation reaction of fatty acid synthesis by the addition to an acyl acceptor of two carbons from malonyl-ACP. Catalyzes the first condensation reaction which initiates fatty acid synthesis and may therefore play a role in governing the total rate of fatty acid production. Possesses both acetoacetyl-ACP synthase and acetyl transacylase activities. Its substrate specificity determines the biosynthesis of branched-chain and/or straight-chain of fatty acids. The protein is Beta-ketoacyl-[acyl-carrier-protein] synthase III of Prochlorococcus marinus (strain MIT 9215).